The primary structure comprises 725 residues: Heme/hemopexin utilization protein C (725 aa).

An N-terminal signal peptide occupies residues 1–21 (MRFSKLSLAIATTLVTANALA). In terms of domain architecture, TBDR plug spans 36-147 (DPSRFAYTPE…LGGVVAMRTP (112 aa)). In terms of domain architecture, TBDR beta-barrel spans 158 to 725 (KFGVKIRQGY…NAKISAVYSF (568 aa)). A TonB C-terminal box motif is present at residues 708 to 725 (SLMEGTGRNAKISAVYSF).

Belongs to the TonB-dependent receptor family.

It localises to the cell outer membrane. Required for utilization of free heme at low concentrations. The sequence is that of Heme/hemopexin utilization protein C (hxuC) from Haemophilus influenzae.